The sequence spans 314 residues: Bifunctional pinoresinol-lariciresinol reductase 3 (314 aa).

Residues 11-17, Arg36, and Lys45 each bind NADP(+); that span reads GGTGFIG. Lys138 functions as the Proton acceptor in the catalytic mechanism. Arg142 is a binding site for NADP(+). His272 contributes to the substrate binding site.

Belongs to the NmrA-type oxidoreductase family. Isoflavone reductase subfamily. As to quaternary structure, dimer.

It carries out the reaction (-)-lariciresinol + NADP(+) = (-)-pinoresinol + NADPH + H(+). The enzyme catalyses (+)-secoisolariciresinol + NADP(+) = (-)-lariciresinol + NADPH + H(+). In terms of biological role, reductase involved in lignan biosynthesis. Catalyzes the enantioselective sequential conversion of (-)-pinoresinol into (-)-lariciresinol and of (-)-lariciresinol into (+)-secoisolariciresinol. Abstracts the 4R-hydride from the NADPH cofactor during catalysis. In Thuja plicata (Western red-cedar), this protein is Bifunctional pinoresinol-lariciresinol reductase 3.